Consider the following 474-residue polypeptide: MERRTKIVCTLGPAVASADGILRLVQDGMDVARLNFSHGDHPDHEQNYKWVREATDKTGRAVGILADLQGPKIRLGRFKEGSTVWETGETVRITVDDVEGTHDRVSTTYKNLAKDARPGDRLLVDDGKVGLVCVSVEGNDVICEVTEGGPVSNNKGVSLPGMDISVPALSEKDIKDLRFALKLGVDFIALSFVRSPADVELVHAIMDEEGRRVPVIAKLEKPEAVAALESIVLAFDAIMVARGDLGVEVPLEEVPLVQKRAIQIARENAKPVIVATQMLDSMIENSRPTRAEASDVANAVLDGADAVMLSGETSVGKDPHNVVRTMSRIVRFAETDGRVPDLTHIPRTKRGVISYSARDIAERLNARALVAFTTSGDTAKRLARLHSHLPLLVFTPDPSVRSQLALTWGAQTFLCPKVDDTDGMMREVDRALLAMDEYQKDDMMVVVAGSPPGVTGNTNMIHVHLLGEDTRIPK.

Substrate is bound at residue Arg33. The K(+) site is built by Asn35, Ser37, and Asp67. Position 35–38 (35–38 (NFSH)) interacts with ATP. ATP is bound by residues Arg74 and Lys155. Residue Glu220 participates in Mg(2+) binding. Substrate is bound by residues Gly243, Asp244, and Thr276. Residue Asp244 participates in Mg(2+) binding.

This sequence belongs to the pyruvate kinase family. As to quaternary structure, homotetramer. Mg(2+) serves as cofactor. It depends on K(+) as a cofactor.

It carries out the reaction pyruvate + ATP = phosphoenolpyruvate + ADP + H(+). The protein operates within carbohydrate degradation; glycolysis; pyruvate from D-glyceraldehyde 3-phosphate: step 5/5. The chain is Pyruvate kinase (pyk) from Corynebacterium efficiens (strain DSM 44549 / YS-314 / AJ 12310 / JCM 11189 / NBRC 100395).